The sequence spans 475 residues: MVDTEMPFWPTNFGISSVDLSMMDDHSHSFDIKPFTTVDFSSISAPHYEDIPFTRADPMVADYKYDLKLQEYQSAIKVEPASPPYYSEKAQLYNRPHEEPSNSLMAIECRVCGDKASGFHYGVHACEGCKGFFRRTIRLKLIYDRCDLNCRIHKKSRNKCQYCRFQKCLAVGMSHNAIRFGRMPQAEKEKLLAEISSDIDQLNPESADLRALAKHLYDSYIKSFPLTKAKARAILTGKTTDKSPFVIYDMNSLMMGEDKIKFKHITPLQEQSKEVAIRIFQGCQFRSVEAVQEITEYAKNIPGFINLDLNDQVTLLKYGVHEIIYTMLASLMNKDGVLISEGQGFMTREFLKSLRKPFGDFMEPKFEFAVKFNALELDDSDLAIFIAVIILSGDRPGLLNVKPIEDIQDNLLQALELQLKLNHPESSQLFAKVLQKMTDLRQIVTEHVQLLHVIKKTETDMSLHPLLQEIYKDLY.

Residue Thr54 is glycosylated (O-linked (GlcNAc) threonine). Phosphoserine; by MAPK is present on Ser82. The nuclear receptor DNA-binding region spans 106–180; sequence AIECRVCGDK…VGMSHNAIRF (75 aa). 2 NR C4-type zinc fingers span residues 109-129 and 146-168; these read CRVCGDKASGFHYGVHACEGC and CDLNCRIHKKSRNKCQYCRFQKC. The interaction with FAM120B stretch occupies residues 175 to 250; that stretch reads HNAIRFGRMP…DKSPFVIYDM (76 aa). Residues 208-473 enclose the NR LBD domain; sequence DLRALAKHLY…HPLLQEIYKD (266 aa). Lys222 participates in a covalent cross-link: Glycyl lysine isopeptide (Lys-Gly) (interchain with G-Cter in ubiquitin). A 9aaTAD motif is present at residues 465–473; sequence PLLQEIYKD.

Belongs to the nuclear hormone receptor family. NR1 subfamily. Interacts with FOXO1 (acetylated form). Heterodimer with other nuclear receptors, such as RXRA. The heterodimer with the retinoic acid receptor RXRA is called adipocyte-specific transcription factor ARF6. Interacts with NCOA6 coactivator, leading to a strong increase in transcription of target genes. Interacts with coactivator PPARBP, leading to a mild increase in transcription of target genes. Interacts with NOCA7 in a ligand-inducible manner. Interacts with NCOA1 and NCOA2 LXXLL motifs. Interacts with ASXL1, ASXL2, DNTTIP2, FAM120B, MAP2K1/MEK1, NR0B2, PDPK1, PRDM16, PRMT2 and TGFB1I1. Interacts (when activated by agonist) with PPP5C. Interacts with HELZ2 and THRAP3; the interaction stimulates the transcriptional activity of PPARG. Interacts with PER2, the interaction is ligand dependent and blocks PPARG recruitment to target promoters. Interacts with NOCT. Interacts with ACTN4. Interacts (when in the liganded conformation) with GPS2. Interacts with CRY1 and CRY2 in a ligand-dependent manner. In the absence of hormonal ligand, interacts with TACC1. In macrophages, interacts with PAQR3 and STUB1; the interactions promote PPARG poylubiquitination and STUB1-mediated degradation. O-GlcNAcylation at Thr-54 reduces transcriptional activity in adipocytes. Post-translationally, phosphorylated at basal conditions and dephosphorylated when treated with the ligand. May be dephosphorylated by PPP5C. The phosphorylated form may be inactive and dephosphorylation induces adipogenic activity. In terms of processing, ubiquitinated by E3 ubiquitin-protein ligase complex containing FBXO9; leading to proteasomal degradation. Ubiquitinated at Lys-222 by TRIM55 leading to proteasomal degradation. Ubiquitinated by E3 ubiquitin-protein ligase STUB1/CHIP; leading to proteasomal degradation.

It is found in the nucleus. Its subcellular location is the cytoplasm. PDPK1 activates its transcriptional activity independently of its kinase activity. Interacts with HELZ2 and THRAP3; the interaction enhances the transcriptional activity of PPARG. Its function is as follows. Nuclear receptor that binds peroxisome proliferators such as hypolipidemic drugs and fatty acids. Once activated by a ligand, the nuclear receptor binds to DNA specific PPAR response elements (PPRE) and modulates the transcription of its target genes, such as acyl-CoA oxidase. It therefore controls the peroxisomal beta-oxidation pathway of fatty acids. Key regulator of adipocyte differentiation and glucose homeostasis. ARF6 acts as a key regulator of the tissue-specific adipocyte P2 (aP2) enhancer. Acts as a critical regulator of gut homeostasis by suppressing NF-kappa-B-mediated pro-inflammatory responses. Plays a role in the regulation of cardiovascular circadian rhythms by regulating the transcription of BMAL1 in the blood vessels. This chain is Peroxisome proliferator-activated receptor gamma (PPARG), found in Cricetulus griseus (Chinese hamster).